Reading from the N-terminus, the 875-residue chain is Protein translocase subunit SecA (875 aa).

ATP contacts are provided by residues Q87, 105-109 (GEGKT), and D512. The Zn(2+) site is built by C860, C862, C871, and H872.

It belongs to the SecA family. As to quaternary structure, monomer and homodimer. Part of the essential Sec protein translocation apparatus which comprises SecA, SecYEG and auxiliary proteins SecDF-YajC and YidC. The cofactor is Zn(2+).

The protein localises to the cell inner membrane. It is found in the cytoplasm. It catalyses the reaction ATP + H2O + cellular proteinSide 1 = ADP + phosphate + cellular proteinSide 2.. Its function is as follows. Part of the Sec protein translocase complex. Interacts with the SecYEG preprotein conducting channel. Has a central role in coupling the hydrolysis of ATP to the transfer of proteins into and across the cell membrane, serving both as a receptor for the preprotein-SecB complex and as an ATP-driven molecular motor driving the stepwise translocation of polypeptide chains across the membrane. This chain is Protein translocase subunit SecA, found in Buchnera aphidicola subsp. Acyrthosiphon pisum (strain APS) (Acyrthosiphon pisum symbiotic bacterium).